We begin with the raw amino-acid sequence, 171 residues long: Shikimate kinase (171 aa).

14-19 lines the ATP pocket; it reads GAGKST. Residue Ser18 participates in Mg(2+) binding. Substrate-binding residues include Asp36, Arg60, and Gly82. Arg120 lines the ATP pocket. Residue Arg139 coordinates substrate. Position 156 (Gln156) interacts with ATP.

Belongs to the shikimate kinase family. Monomer. The cofactor is Mg(2+).

The protein localises to the cytoplasm. It catalyses the reaction shikimate + ATP = 3-phosphoshikimate + ADP + H(+). Its pathway is metabolic intermediate biosynthesis; chorismate biosynthesis; chorismate from D-erythrose 4-phosphate and phosphoenolpyruvate: step 5/7. Its function is as follows. Catalyzes the specific phosphorylation of the 3-hydroxyl group of shikimic acid using ATP as a cosubstrate. This chain is Shikimate kinase, found in Shewanella amazonensis (strain ATCC BAA-1098 / SB2B).